Consider the following 396-residue polypeptide: Elongation factor Tu (396 aa).

A tr-type G domain is found at 10-206; that stretch reads KPHVNVGTIG…ALDTYIPTPE (197 aa). A G1 region spans residues 19 to 26; that stretch reads GHVDHGKT. 19–26 is a binding site for GTP; that stretch reads GHVDHGKT. Mg(2+) is bound at residue Thr-26. Positions 60–64 are G2; that stretch reads GITIN. Residues 81–84 form a G3 region; that stretch reads DCPG. GTP is bound by residues 81–85 and 136–139; these read DCPGH and NKAD. Positions 136–139 are G4; that stretch reads NKAD. The tract at residues 174–176 is G5; that stretch reads SAK.

Belongs to the TRAFAC class translation factor GTPase superfamily. Classic translation factor GTPase family. EF-Tu/EF-1A subfamily. Monomer.

The protein localises to the cytoplasm. It catalyses the reaction GTP + H2O = GDP + phosphate + H(+). Its function is as follows. GTP hydrolase that promotes the GTP-dependent binding of aminoacyl-tRNA to the A-site of ribosomes during protein biosynthesis. The protein is Elongation factor Tu of Janthinobacterium sp. (strain Marseille) (Minibacterium massiliensis).